The sequence spans 190 residues: RNA-binding protein OPG065 (190 aa).

Residues 5–70 (YIDERSDAEI…DIPPRWFMTT (66 aa)) form the Z-binding domain. The DRBM domain maps to 117–184 (NPVTIINEYC…AKLAVDKLLG (68 aa)).

Belongs to the orthopoxvirus OPG065 family. In terms of assembly, interacts with host G1P2/ISG15. Interacts with host EIF2AK2/PKR. Interacts with host ZBP1.

In terms of biological role, RNA-binding protein that plays a role in the inhibition of multiple cellular antiviral responses activated by double-stranded RNA (dsRNA), such as inhibition of PKR activation, necroptosis, and IFN-mediated antiviral activities. Recognizes and binds Z-RNA structures via its Z-binding domain and dsRNA via its DRBM domain: RNA-binding activity is required to escape host ZBP1-dependent necroptosis. Mechanistically, the Z-binding domain binds Z-RNAs that are produced during vaccinia virus infection, thereby competing with Z-RNA detection by host ZBP1, suppressing ZBP1-dependent necroptosis. Acts as a key inhibitor of the interferon response by blocking the phosphorylation and subsequent activation of IRF3 and IRF7 kinases that are required for interferon-alpha gene expression. Inhibits NF-kappa-B activation and the ubiquitin-like protein ISG15, which is an early antiviral protein. The binding with host ISG15 subsequently blocks host ISGylation. This is RNA-binding protein OPG065 (OPG065) from Homo sapiens (Human).